We begin with the raw amino-acid sequence, 339 residues long: NADH-quinone oxidoreductase subunit H (339 aa).

9 consecutive transmembrane segments (helical) span residues 9–29 (IFPL…LILC), 50–70 (PNVV…KLLF), 82–102 (ILFI…WAVI), 115–135 (VGVL…IIAG), 161–181 (MGLV…SEII), 187–207 (MPWW…ISVL), 235–255 (MGFA…SAMT), 275–295 (IPGF…FLWI), and 311–331 (GWKV…SVLV).

Belongs to the complex I subunit 1 family. NDH-1 is composed of 14 different subunits. Subunits NuoA, H, J, K, L, M, N constitute the membrane sector of the complex.

Its subcellular location is the cell membrane. The catalysed reaction is a quinone + NADH + 5 H(+)(in) = a quinol + NAD(+) + 4 H(+)(out). In terms of biological role, NDH-1 shuttles electrons from NADH, via FMN and iron-sulfur (Fe-S) centers, to quinones in the respiratory chain. The immediate electron acceptor for the enzyme in this species is believed to be ubiquinone. Couples the redox reaction to proton translocation (for every two electrons transferred, four hydrogen ions are translocated across the cytoplasmic membrane), and thus conserves the redox energy in a proton gradient. This subunit may bind ubiquinone. The protein is NADH-quinone oxidoreductase subunit H of Rickettsia africae (strain ESF-5).